The primary structure comprises 398 residues: Carbamoyl phosphate synthase large chain (398 aa).

The 187-residue stretch at 1–187 (KLGVPQPEGG…LAKIAAKVIV (187 aa)) folds into the ATP-grasp domain. The tract at residues 1–255 (KLGVPQPEGG…YKAELAADNV (255 aa)) is carbamoyl phosphate synthetic domain. Residues Arg32, Asp71, Leu73, Glu78, Gly103, Val104, His105, Ser106, Gln146, and Glu158 each coordinate ATP. Residues Gln146, Glu158, and Asn160 each coordinate Mg(2+). The Mn(2+) site is built by Gln146, Glu158, and Asn160. Residues 254–395 (NVLPLTGKVF…NEYHKEMEEE (142 aa)) enclose the MGS-like domain. Residues 256–398 (LPLTGKVFLS…HKEMEEENKV (143 aa)) are allosteric domain.

Belongs to the CarB family. As to quaternary structure, composed of two chains; the small (or glutamine) chain promotes the hydrolysis of glutamine to ammonia, which is used by the large (or ammonia) chain to synthesize carbamoyl phosphate. Tetramer of heterodimers (alpha,beta)4. Mg(2+) serves as cofactor. The cofactor is Mn(2+).

The catalysed reaction is hydrogencarbonate + L-glutamine + 2 ATP + H2O = carbamoyl phosphate + L-glutamate + 2 ADP + phosphate + 2 H(+). It carries out the reaction hydrogencarbonate + NH4(+) + 2 ATP = carbamoyl phosphate + 2 ADP + phosphate + 2 H(+). The protein operates within amino-acid biosynthesis; L-arginine biosynthesis; carbamoyl phosphate from bicarbonate: step 1/1. Its pathway is pyrimidine metabolism; UMP biosynthesis via de novo pathway; (S)-dihydroorotate from bicarbonate: step 1/3. In terms of biological role, large subunit of the glutamine-dependent carbamoyl phosphate synthetase (CPSase). CPSase catalyzes the formation of carbamoyl phosphate from the ammonia moiety of glutamine, carbonate, and phosphate donated by ATP, constituting the first step of 2 biosynthetic pathways, one leading to arginine and/or urea and the other to pyrimidine nucleotides. The large subunit (synthetase) binds the substrates ammonia (free or transferred from glutamine from the small subunit), hydrogencarbonate and ATP and carries out an ATP-coupled ligase reaction, activating hydrogencarbonate by forming carboxy phosphate which reacts with ammonia to form carbamoyl phosphate. The chain is Carbamoyl phosphate synthase large chain from Methanosarcina barkeri.